A 439-amino-acid chain; its full sequence is Methylenetetrahydrofolate--tRNA-(uracil-5-)-methyltransferase TrmFO (439 aa).

Residue 9 to 14 (GAGLAG) participates in FAD binding.

Belongs to the MnmG family. TrmFO subfamily. It depends on FAD as a cofactor.

Its subcellular location is the cytoplasm. It carries out the reaction uridine(54) in tRNA + (6R)-5,10-methylene-5,6,7,8-tetrahydrofolate + NADH + H(+) = 5-methyluridine(54) in tRNA + (6S)-5,6,7,8-tetrahydrofolate + NAD(+). It catalyses the reaction uridine(54) in tRNA + (6R)-5,10-methylene-5,6,7,8-tetrahydrofolate + NADPH + H(+) = 5-methyluridine(54) in tRNA + (6S)-5,6,7,8-tetrahydrofolate + NADP(+). In terms of biological role, catalyzes the folate-dependent formation of 5-methyl-uridine at position 54 (M-5-U54) in all tRNAs. The sequence is that of Methylenetetrahydrofolate--tRNA-(uracil-5-)-methyltransferase TrmFO from Desulforudis audaxviator (strain MP104C).